The primary structure comprises 237 residues: MFLTRTEYDRGVNTFSPEGRLFQVEYAIEAIKLGSTAIGVKTKEGVVLAVEKRITSPLLEPSSVEKIMEIDDHIGCAMSGLIADARTLVEHARVETQNHRFSYGEPMTVESTTQALCDLALRFGEGEEESMSRPFGVSLLIAGHDENGPSLYYTDPSGTFWQCNAKAIGSGSEGADSSLQEQFNKDLSLQEAETIAVSILKQVMEEKVTPNNVDIAKVAPAYHLYTPQEVEAVIARL.

An N-acetylmethionine modification is found at Met-1. Residues Lys-43 and Lys-66 each participate in a glycyl lysine isopeptide (Lys-Gly) (interchain with G-Cter in ubiquitin) cross-link.

The protein belongs to the peptidase T1A family. Component of the 20S core complex of the 26S proteasome. The 26S proteasome is composed of a core protease (CP), known as the 20S proteasome, capped at one or both ends by the 19S regulatory particle (RP/PA700). The 20S proteasome core is composed of 28 subunits that are arranged in four stacked rings, resulting in a barrel-shaped structure. The two end rings are each formed by seven alpha subunits, and the two central rings are each formed by seven beta subunits. The catalytic chamber with the active sites is on the inside of the barrel.

It localises to the cytoplasm. It is found in the nucleus. Its function is as follows. The proteasome is a multicatalytic proteinase complex which is characterized by its ability to cleave peptides with Arg, Phe, Tyr, Leu, and Glu adjacent to the leaving group at neutral or slightly basic pH. The proteasome has an ATP-dependent proteolytic activity. In Arabidopsis thaliana (Mouse-ear cress), this protein is Proteasome subunit alpha type-5-A (PAE1).